A 403-amino-acid polypeptide reads, in one-letter code: uncharacterized protein (403 aa).

12 helical membrane passes run 25 to 47 (IAFF…ILFL), 62 to 81 (SLSA…GPLS), 88 to 110 (VVMS…MNSW), 114 to 136 (IFMR…TYLS), 143 to 165 (VLSF…GRFL), 175 to 197 (WNIA…VYLL), 229 to 251 (LFFM…GYRL), 256 to 278 (FFLG…YSSP), 290 to 307 (GVIL…VLIT), 311 to 330 (IVLL…FAAH), 350 to 372 (SIYL…IFWI), and 376 to 398 (WLGI…IRLL).

The protein belongs to the major facilitator superfamily.

The protein resides in the cell membrane. This is an uncharacterized protein from Buchnera aphidicola subsp. Baizongia pistaciae (strain Bp).